A 330-amino-acid chain; its full sequence is 2-phospho-L-lactate transferase (330 aa).

7,8-didemethyl-8-hydroxy-5-deazariboflavin is bound at residue Asp49.

It belongs to the CofD family. Homodimer. Requires Mg(2+) as cofactor.

The enzyme catalyses (2S)-lactyl-2-diphospho-5'-guanosine + 7,8-didemethyl-8-hydroxy-5-deazariboflavin = oxidized coenzyme F420-0 + GMP + H(+). Its pathway is cofactor biosynthesis; coenzyme F420 biosynthesis. Catalyzes the transfer of the 2-phospholactate moiety from (2S)-lactyl-2-diphospho-5'-guanosine to 7,8-didemethyl-8-hydroxy-5-deazariboflavin (FO) with the formation of oxidized coenzyme F420-0 and GMP. In Haloarcula marismortui (strain ATCC 43049 / DSM 3752 / JCM 8966 / VKM B-1809) (Halobacterium marismortui), this protein is 2-phospho-L-lactate transferase.